The primary structure comprises 321 residues: Beta-ketoacyl-[acyl-carrier-protein] synthase III (321 aa).

Catalysis depends on residues cysteine 116 and histidine 248. The segment at 249-253 is ACP-binding; it reads QANLR. The active site involves asparagine 278.

The protein belongs to the thiolase-like superfamily. FabH family. As to quaternary structure, homodimer.

The protein resides in the cytoplasm. It catalyses the reaction malonyl-[ACP] + acetyl-CoA + H(+) = 3-oxobutanoyl-[ACP] + CO2 + CoA. It functions in the pathway lipid metabolism; fatty acid biosynthesis. Functionally, catalyzes the condensation reaction of fatty acid synthesis by the addition to an acyl acceptor of two carbons from malonyl-ACP. Catalyzes the first condensation reaction which initiates fatty acid synthesis and may therefore play a role in governing the total rate of fatty acid production. Possesses both acetoacetyl-ACP synthase and acetyl transacylase activities. Its substrate specificity determines the biosynthesis of branched-chain and/or straight-chain of fatty acids. The chain is Beta-ketoacyl-[acyl-carrier-protein] synthase III from Yersinia enterocolitica serotype O:8 / biotype 1B (strain NCTC 13174 / 8081).